The primary structure comprises 75 residues: Pi-hexatoxin-Hi1a (75 aa).

Cystine bridges form between Cys3–Cys18, Cys10–Cys23, Cys17–Cys33, Cys40–Cys55, Cys47–Cys60, and Cys54–Cys71. Domain repeat units follow at residues 3-33 (CIRK…FEVC) and 40-71 (CLVK…SSVC). The segment at 3 to 71 (CIRKWLSCVD…KRSGNKSSVC (69 aa)) is 2 X approximate repeats with cysteine pattern C-C-CC-C-C.

The protein belongs to the psalmotoxin-1 family. Double-knot toxin subfamily. In terms of tissue distribution, expressed by the venom gland.

It is found in the secreted. In terms of biological role, this toxin potently and selectively inhibits ASIC1a (IC(50)=0.4 nM on rASIC1a and IC(50)=0.52 nM on hASIC1a), an isoform of the gene ASIC1. It incompletely inhibits ASIC1a activation in a pH-independent and slowly reversible manner (Tau(off)=14.2 minutes for rASIC1a and 31.8 minutes for hASIC1a). This toxin acts by binding to and stabilizing the closed state of the channel, thereby impeding the transition into a conducting state. This toxin may bind to the acidic pocket of ASIC1a, since mutation of a key residue of this pocket (Arg-350) abolishes the ability of the toxin to inhibit ASIC1a. In addition, it shows antiparasitic activities, since it moderately inhibits the larval development of the major pathogenic nematode of ruminants (H.contortus, IC(50)=22.9 uM). In vivo, this toxin protects the brain from neuronal injury when administered up to 8 hours after stroke onset. The protein is Pi-hexatoxin-Hi1a of Hadronyche infensa (Fraser island funnel-web spider).